Consider the following 495-residue polypeptide: Probable cytochrome P450 4s3 (495 aa).

Heme-binding residues include glutamate 307 and cysteine 436.

This sequence belongs to the cytochrome P450 family. It depends on heme as a cofactor.

It localises to the endoplasmic reticulum membrane. Its subcellular location is the microsome membrane. May be involved in the metabolism of insect hormones and in the breakdown of synthetic insecticides. The sequence is that of Probable cytochrome P450 4s3 (Cyp4s3) from Drosophila melanogaster (Fruit fly).